We begin with the raw amino-acid sequence, 317 residues long: D-alanine--D-alanine ligase (317 aa).

The 197-residue stretch at 103 to 299 (KHIFHSLNID…FNELVKIIVE (197 aa)) folds into the ATP-grasp domain. Position 130 to 183 (130 to 183 (KVDYPYVLKPINEGSSIGVHMIFSHEDYLELKNNSSTIMEKMIIEEYIPGIELH)) interacts with ATP. Mg(2+) contacts are provided by Asp251, Glu265, and Asn267.

This sequence belongs to the D-alanine--D-alanine ligase family. Mg(2+) is required as a cofactor. Mn(2+) serves as cofactor.

The protein resides in the cytoplasm. The enzyme catalyses 2 D-alanine + ATP = D-alanyl-D-alanine + ADP + phosphate + H(+). It functions in the pathway cell wall biogenesis; peptidoglycan biosynthesis. Cell wall formation. The polypeptide is D-alanine--D-alanine ligase (Wolbachia pipientis subsp. Culex pipiens (strain wPip)).